A 714-amino-acid chain; its full sequence is Fatty acid oxidation complex subunit alpha (714 aa).

The interval 1–190 (MEMASAFTLN…KLGLVDDVVP (190 aa)) is enoyl-CoA hydratase. Positions 306 to 714 (APLNSVGILG…FWKTTATDLQ (409 aa)) are 3-hydroxyacyl-CoA dehydrogenase.

This sequence in the N-terminal section; belongs to the enoyl-CoA hydratase/isomerase family. The protein in the central section; belongs to the 3-hydroxyacyl-CoA dehydrogenase family. Heterotetramer of two alpha chains (FadJ) and two beta chains (FadI).

It localises to the cytoplasm. It catalyses the reaction a (3S)-3-hydroxyacyl-CoA = a (2E)-enoyl-CoA + H2O. It carries out the reaction a 4-saturated-(3S)-3-hydroxyacyl-CoA = a (3E)-enoyl-CoA + H2O. The catalysed reaction is a (3S)-3-hydroxyacyl-CoA + NAD(+) = a 3-oxoacyl-CoA + NADH + H(+). The enzyme catalyses (3S)-3-hydroxybutanoyl-CoA = (3R)-3-hydroxybutanoyl-CoA. The protein operates within lipid metabolism; fatty acid beta-oxidation. Functionally, catalyzes the formation of a hydroxyacyl-CoA by addition of water on enoyl-CoA. Also exhibits 3-hydroxyacyl-CoA epimerase and 3-hydroxyacyl-CoA dehydrogenase activities. This Escherichia coli O7:K1 (strain IAI39 / ExPEC) protein is Fatty acid oxidation complex subunit alpha.